Reading from the N-terminus, the 554-residue chain is uncharacterized protein (554 aa).

This is an uncharacterized protein from Saccharomyces cerevisiae (strain ATCC 204508 / S288c) (Baker's yeast).